A 292-amino-acid chain; its full sequence is 4-hydroxy-tetrahydrodipicolinate synthase (292 aa).

Threonine 45 serves as a coordination point for pyruvate. Tyrosine 133 functions as the Proton donor/acceptor in the catalytic mechanism. Lysine 161 functions as the Schiff-base intermediate with substrate in the catalytic mechanism. Isoleucine 203 lines the pyruvate pocket.

Belongs to the DapA family. In terms of assembly, homodimer.

It is found in the cytoplasm. It carries out the reaction L-aspartate 4-semialdehyde + pyruvate = (2S,4S)-4-hydroxy-2,3,4,5-tetrahydrodipicolinate + H2O + H(+). The protein operates within amino-acid biosynthesis; L-lysine biosynthesis via DAP pathway; (S)-tetrahydrodipicolinate from L-aspartate: step 3/4. In terms of biological role, catalyzes the condensation of (S)-aspartate-beta-semialdehyde [(S)-ASA] and pyruvate to 4-hydroxy-tetrahydrodipicolinate (HTPA). The sequence is that of 4-hydroxy-tetrahydrodipicolinate synthase from Stutzerimonas stutzeri (strain A1501) (Pseudomonas stutzeri).